A 388-amino-acid chain; its full sequence is Glutamate 5-kinase (388 aa).

Lysine 21 contributes to the ATP binding site. 3 residues coordinate substrate: serine 61, aspartate 148, and asparagine 160. ATP is bound by residues 180–181 and 222–228; these read TD and TGGMITK. One can recognise a PUA domain in the interval 285-363; that stretch reads RGSVFLDPGA…RWLARELGAE (79 aa).

It belongs to the glutamate 5-kinase family.

The protein resides in the cytoplasm. It carries out the reaction L-glutamate + ATP = L-glutamyl 5-phosphate + ADP. Its pathway is amino-acid biosynthesis; L-proline biosynthesis; L-glutamate 5-semialdehyde from L-glutamate: step 1/2. Its function is as follows. Catalyzes the transfer of a phosphate group to glutamate to form L-glutamate 5-phosphate. The protein is Glutamate 5-kinase of Thermobifida fusca (strain YX).